Reading from the N-terminus, the 211-residue chain is FMN-dependent NADH:quinone oxidoreductase (211 aa).

FMN is bound by residues S10 and 16-18; that span reads STS.

The protein belongs to the azoreductase type 1 family. In terms of assembly, homodimer. The cofactor is FMN.

It carries out the reaction 2 a quinone + NADH + H(+) = 2 a 1,4-benzosemiquinone + NAD(+). The catalysed reaction is N,N-dimethyl-1,4-phenylenediamine + anthranilate + 2 NAD(+) = 2-(4-dimethylaminophenyl)diazenylbenzoate + 2 NADH + 2 H(+). In terms of biological role, quinone reductase that provides resistance to thiol-specific stress caused by electrophilic quinones. Its function is as follows. Also exhibits azoreductase activity. Catalyzes the reductive cleavage of the azo bond in aromatic azo compounds to the corresponding amines. The sequence is that of FMN-dependent NADH:quinone oxidoreductase from Frankia casuarinae (strain DSM 45818 / CECT 9043 / HFP020203 / CcI3).